Consider the following 423-residue polypeptide: POU domain, class 5, transcription factor 1.3 (423 aa).

Positions 85-211 (GALSSGDPSP…GSGNEEDGTT (127 aa)) are disordered. The segment covering 94-110 (PEGRNEEDHGSISEERS) has biased composition (basic and acidic residues). 3 stretches are compositionally biased toward polar residues: residues 111-120 (SGTPSPNSPM), 156-173 (PQQSDCSPTASLESGASN), and 194-203 (PSPNNASFGS). Residues 207-281 (EDGTTLEEME…LLEQWLGEAE (75 aa)) enclose the POU-specific domain. Residues 301 to 360 (KRKMRTCFDSVLKGRLEGHFMCNQKPGARELAEIAKELGLEKDVVRVWFCNRRQKEKSKS) constitute a DNA-binding region (homeobox).

This sequence belongs to the POU transcription factor family. Class-5 subfamily. In terms of assembly, interacts with the transcription factors tcf7l1/tcf3 and vegt.

Its subcellular location is the nucleus. Its function is as follows. Transcription factor that binds to the octamer motif (5'-ATTTGCAT-3'). Antagonizes the activity of nodal/activin signaling during gastrulation to suppress mesendoderm formation. Acts maternally to inhibit vegt and beta-catenin-activated gene transcription, probably by forming a transcriptional repression complex on the promoters of target genes. Binds to an octamer motif in interspersed RNA. The protein is POU domain, class 5, transcription factor 1.3 (pou5f1.3) of Xenopus tropicalis (Western clawed frog).